We begin with the raw amino-acid sequence, 211 residues long: ATP phosphoribosyltransferase (211 aa).

It belongs to the ATP phosphoribosyltransferase family. Short subfamily. In terms of assembly, heteromultimer composed of HisG and HisZ subunits.

It localises to the cytoplasm. The catalysed reaction is 1-(5-phospho-beta-D-ribosyl)-ATP + diphosphate = 5-phospho-alpha-D-ribose 1-diphosphate + ATP. It participates in amino-acid biosynthesis; L-histidine biosynthesis; L-histidine from 5-phospho-alpha-D-ribose 1-diphosphate: step 1/9. Its function is as follows. Catalyzes the condensation of ATP and 5-phosphoribose 1-diphosphate to form N'-(5'-phosphoribosyl)-ATP (PR-ATP). Has a crucial role in the pathway because the rate of histidine biosynthesis seems to be controlled primarily by regulation of HisG enzymatic activity. In Pseudomonas paraeruginosa (strain DSM 24068 / PA7) (Pseudomonas aeruginosa (strain PA7)), this protein is ATP phosphoribosyltransferase.